The primary structure comprises 252 residues: Chitooligosaccharide deacetylase (252 aa).

Mg(2+) contacts are provided by histidine 61 and histidine 125.

This sequence belongs to the YdjC deacetylase family. ChbG subfamily. As to quaternary structure, homodimer. Mg(2+) serves as cofactor.

The protein resides in the cytoplasm. The enzyme catalyses N,N'-diacetylchitobiose + H2O = N-acetyl-beta-D-glucosaminyl-(1-&gt;4)-D-glucosamine + acetate. It catalyses the reaction diacetylchitobiose-6'-phosphate + H2O = N'-monoacetylchitobiose-6'-phosphate + acetate. It functions in the pathway glycan degradation; chitin degradation. Functionally, involved in the degradation of chitin. ChbG is essential for growth on the acetylated chitooligosaccharides chitobiose and chitotriose but is dispensable for growth on cellobiose and chitosan dimer, the deacetylated form of chitobiose. Deacetylation of chitobiose-6-P and chitotriose-6-P is necessary for both the activation of the chb promoter by the regulatory protein ChbR and the hydrolysis of phosphorylated beta-glucosides by the phospho-beta-glucosidase ChbF. Catalyzes the removal of only one acetyl group from chitobiose-6-P to yield monoacetylchitobiose-6-P, the inducer of ChbR and the substrate of ChbF. The sequence is that of Chitooligosaccharide deacetylase from Salmonella paratyphi C (strain RKS4594).